The primary structure comprises 429 residues: Glutamate-1-semialdehyde 2,1-aminomutase (429 aa).

Lysine 272 carries the post-translational modification N6-(pyridoxal phosphate)lysine.

The protein belongs to the class-III pyridoxal-phosphate-dependent aminotransferase family. HemL subfamily. Pyridoxal 5'-phosphate is required as a cofactor.

It localises to the cytoplasm. The enzyme catalyses (S)-4-amino-5-oxopentanoate = 5-aminolevulinate. It participates in porphyrin-containing compound metabolism; protoporphyrin-IX biosynthesis; 5-aminolevulinate from L-glutamyl-tRNA(Glu): step 2/2. This is Glutamate-1-semialdehyde 2,1-aminomutase from Methanothrix thermoacetophila (strain DSM 6194 / JCM 14653 / NBRC 101360 / PT) (Methanosaeta thermophila).